The primary structure comprises 499 residues: Putative sperm motility kinase W (499 aa).

The Protein kinase domain maps to 14–262 (YKVLFTLGHG…IEDIERHPWV (249 aa)). Residues 20–28 (LGHGSFGTV) and lysine 43 contribute to the ATP site. Aspartate 133 acts as the Proton acceptor in catalysis. The 41-residue stretch at 274–314 (DPDYNIIEMLCGMGFDANEILESLQRKKYNESMGAYLILKA) folds into the UBA domain.

It belongs to the protein kinase superfamily. CAMK Ser/Thr protein kinase family. Smok subfamily.

The enzyme catalyses L-seryl-[protein] + ATP = O-phospho-L-seryl-[protein] + ADP + H(+). The catalysed reaction is L-threonyl-[protein] + ATP = O-phospho-L-threonyl-[protein] + ADP + H(+). Its function is as follows. May play a role in sperm motility, especially in the regulation of flagellar function. The protein is Putative sperm motility kinase W of Mus musculus (Mouse).